Reading from the N-terminus, the 95-residue chain is Large ribosomal subunit protein uL24c (95 aa).

Belongs to the universal ribosomal protein uL24 family. In terms of assembly, part of the 50S ribosomal subunit.

It is found in the plastid. It localises to the chloroplast. In terms of biological role, one of two assembly initiator proteins, it binds directly to the 5'-end of the 23S rRNA, where it nucleates assembly of the 50S subunit. The chain is Large ribosomal subunit protein uL24c (rpl24) from Porphyra purpurea (Red seaweed).